We begin with the raw amino-acid sequence, 203 residues long: FMN-dependent NADH:quinone oxidoreductase (203 aa).

Residues serine 9, 15 to 17, and 139 to 142 each bind FMN; these read SVS and TRGG.

It belongs to the azoreductase type 1 family. As to quaternary structure, homodimer. FMN is required as a cofactor.

The catalysed reaction is 2 a quinone + NADH + H(+) = 2 a 1,4-benzosemiquinone + NAD(+). It catalyses the reaction N,N-dimethyl-1,4-phenylenediamine + anthranilate + 2 NAD(+) = 2-(4-dimethylaminophenyl)diazenylbenzoate + 2 NADH + 2 H(+). Quinone reductase that provides resistance to thiol-specific stress caused by electrophilic quinones. Its function is as follows. Also exhibits azoreductase activity. Catalyzes the reductive cleavage of the azo bond in aromatic azo compounds to the corresponding amines. In Albidiferax ferrireducens (strain ATCC BAA-621 / DSM 15236 / T118) (Rhodoferax ferrireducens), this protein is FMN-dependent NADH:quinone oxidoreductase.